A 104-amino-acid polypeptide reads, in one-letter code: ATP-dependent Clp protease adapter protein ClpS (104 aa).

The protein belongs to the ClpS family. As to quaternary structure, binds to the N-terminal domain of the chaperone ClpA.

Its function is as follows. Involved in the modulation of the specificity of the ClpAP-mediated ATP-dependent protein degradation. The chain is ATP-dependent Clp protease adapter protein ClpS from Bordetella bronchiseptica (strain ATCC BAA-588 / NCTC 13252 / RB50) (Alcaligenes bronchisepticus).